A 263-amino-acid polypeptide reads, in one-letter code: Protein STK_14130 (263 aa).

The protein belongs to the CinA family.

The sequence is that of Protein STK_14130 from Sulfurisphaera tokodaii (strain DSM 16993 / JCM 10545 / NBRC 100140 / 7) (Sulfolobus tokodaii).